Here is a 323-residue protein sequence, read N- to C-terminus: tRNA U34 carboxymethyltransferase (323 aa).

Carboxy-S-adenosyl-L-methionine is bound by residues lysine 91, tryptophan 105, lysine 110, glycine 130, 181–182 (IE), methionine 196, tyrosine 200, and arginine 315.

Belongs to the class I-like SAM-binding methyltransferase superfamily. CmoB family. In terms of assembly, homotetramer.

It catalyses the reaction carboxy-S-adenosyl-L-methionine + 5-hydroxyuridine(34) in tRNA = 5-carboxymethoxyuridine(34) in tRNA + S-adenosyl-L-homocysteine + H(+). Functionally, catalyzes carboxymethyl transfer from carboxy-S-adenosyl-L-methionine (Cx-SAM) to 5-hydroxyuridine (ho5U) to form 5-carboxymethoxyuridine (cmo5U) at position 34 in tRNAs. The chain is tRNA U34 carboxymethyltransferase from Edwardsiella ictaluri (strain 93-146).